Consider the following 361-residue polypeptide: Histidinol-phosphate aminotransferase (361 aa).

The disordered stretch occupies residues 26–45; the sequence is GMDPEDLTKLSSNENPHGPS. K222 is modified (N6-(pyridoxal phosphate)lysine).

The protein belongs to the class-II pyridoxal-phosphate-dependent aminotransferase family. Histidinol-phosphate aminotransferase subfamily. It depends on pyridoxal 5'-phosphate as a cofactor.

The enzyme catalyses L-histidinol phosphate + 2-oxoglutarate = 3-(imidazol-4-yl)-2-oxopropyl phosphate + L-glutamate. It participates in amino-acid biosynthesis; L-histidine biosynthesis; L-histidine from 5-phospho-alpha-D-ribose 1-diphosphate: step 7/9. This Haloferax volcanii (strain ATCC 29605 / DSM 3757 / JCM 8879 / NBRC 14742 / NCIMB 2012 / VKM B-1768 / DS2) (Halobacterium volcanii) protein is Histidinol-phosphate aminotransferase (hisC).